The chain runs to 124 residues: Ribonuclease pancreatic (124 aa).

A compositionally biased stretch (basic and acidic residues) spans Ser-1–Met-13. The disordered stretch occupies residues Ser-1–Ser-23. Residues Lys-7 and Arg-10 each contribute to the substrate site. Residue His-12 is the Proton acceptor of the active site. Disulfide bonds link Cys-26–Cys-84, Cys-40–Cys-95, Cys-58–Cys-110, and Cys-65–Cys-72. Substrate-binding positions include Lys-41–Thr-45, Lys-66, and Arg-85. The active-site Proton donor is the His-119.

The protein belongs to the pancreatic ribonuclease family. Monomer. Interacts with and forms tight 1:1 complexes with RNH1. Dimerization of two such complexes may occur. Interaction with RNH1 inhibits this protein. As to expression, pancreas.

The protein resides in the secreted. The enzyme catalyses an [RNA] containing cytidine + H2O = an [RNA]-3'-cytidine-3'-phosphate + a 5'-hydroxy-ribonucleotide-3'-[RNA].. It carries out the reaction an [RNA] containing uridine + H2O = an [RNA]-3'-uridine-3'-phosphate + a 5'-hydroxy-ribonucleotide-3'-[RNA].. In terms of biological role, endonuclease that catalyzes the cleavage of RNA on the 3' side of pyrimidine nucleotides. Acts on single-stranded and double-stranded RNA. This Camelus bactrianus (Bactrian camel) protein is Ribonuclease pancreatic (RNASE1).